A 348-amino-acid polypeptide reads, in one-letter code: Dihydroorotase (348 aa).

Zn(2+) contacts are provided by histidine 14 and histidine 16. Substrate is bound by residues 16 to 18 (HLR) and asparagine 42. Positions 100, 137, and 175 each coordinate Zn(2+). At lysine 100 the chain carries N6-carboxylysine. Histidine 137 contributes to the substrate binding site. Leucine 220 contributes to the substrate binding site. Residue aspartate 248 coordinates Zn(2+). Aspartate 248 is an active-site residue. Residues histidine 252 and alanine 264 each contribute to the substrate site.

This sequence belongs to the metallo-dependent hydrolases superfamily. DHOase family. Class II DHOase subfamily. Homodimer. The cofactor is Zn(2+).

The enzyme catalyses (S)-dihydroorotate + H2O = N-carbamoyl-L-aspartate + H(+). It participates in pyrimidine metabolism; UMP biosynthesis via de novo pathway; (S)-dihydroorotate from bicarbonate: step 3/3. Its function is as follows. Catalyzes the reversible cyclization of carbamoyl aspartate to dihydroorotate. The sequence is that of Dihydroorotase from Pseudomonas paraeruginosa (strain DSM 24068 / PA7) (Pseudomonas aeruginosa (strain PA7)).